The primary structure comprises 2789 residues: Testis-expressed protein 15 (2789 aa).

Polar residues predominate over residues 34 to 46; it reads HNNTGSSTVTTSK. Disordered stretches follow at residues 34-99, 169-191, 1063-1166, 2303-2331, and 2351-2379; these read HNNT…SSEV, ENQN…AYTK, FSSK…EHQP, KNIS…DTTV, and KATF…DSLK. The span at 47–59 shows a compositional bias: basic and acidic residues; the sequence is SIKDPRLMRREES. Positions 80–98 are enriched in polar residues; that stretch reads DNVNSEIKSTPSNSASSSE. Basic and acidic residues predominate over residues 170-179; sequence NQNHSEEKAQ. A compositionally biased stretch (basic residues) spans 1063–1077; sequence FSSKRKYDKRRKKRA. 2 stretches are compositionally biased toward low complexity: residues 1106 to 1116 and 1134 to 1160; these read RKSMASSVSKS and SQLP…NPSL.

The protein belongs to the TEX15 family. Interacts with PIWIL4 and PIWIL2. Expressed in testis, predominantly in germ cells. Low expression, if any, in ovary. Also expressed in several cancers.

Its subcellular location is the cytoplasm. It localises to the nucleus. Functionally, required during spermatogenesis for normal chromosome synapsis and meiotic recombination in germ cells. Necessary for formation of DMC1 and RAD51 foci on meiotic chromosomes, suggesting a specific role in DNA double-stranded break repair. Essential executor of PIWIL4-piRNA pathway directed transposon DNA methylation and silencing in the male embryonic germ cells. PIWIL4-piRNA binds to nascent transposon transcripts and interacts with TEX15, which may in turn recruit the epigenetic silencing machinery to the transposon loci. Not required for piRNA biosynthesis. The sequence is that of Testis-expressed protein 15 (TEX15) from Homo sapiens (Human).